Consider the following 253-residue polypeptide: Ubiquinone/menaquinone biosynthesis C-methyltransferase UbiE (253 aa).

S-adenosyl-L-methionine is bound by residues Thr76, Asp97, Asn125–Ala126, and Ser142.

This sequence belongs to the class I-like SAM-binding methyltransferase superfamily. MenG/UbiE family.

The enzyme catalyses a 2-demethylmenaquinol + S-adenosyl-L-methionine = a menaquinol + S-adenosyl-L-homocysteine + H(+). It catalyses the reaction a 2-methoxy-6-(all-trans-polyprenyl)benzene-1,4-diol + S-adenosyl-L-methionine = a 5-methoxy-2-methyl-3-(all-trans-polyprenyl)benzene-1,4-diol + S-adenosyl-L-homocysteine + H(+). Its pathway is quinol/quinone metabolism; menaquinone biosynthesis; menaquinol from 1,4-dihydroxy-2-naphthoate: step 2/2. It functions in the pathway cofactor biosynthesis; ubiquinone biosynthesis. Methyltransferase required for the conversion of demethylmenaquinol (DMKH2) to menaquinol (MKH2) and the conversion of 2-polyprenyl-6-methoxy-1,4-benzoquinol (DDMQH2) to 2-polyprenyl-3-methyl-6-methoxy-1,4-benzoquinol (DMQH2). The polypeptide is Ubiquinone/menaquinone biosynthesis C-methyltransferase UbiE (Xylella fastidiosa (strain M12)).